The following is a 62-amino-acid chain: Rhodotorucin-A peptides type 1 (62 aa).

A propeptide spanning residues Met-1–Ala-3 is cleaved from the precursor. Cys-14 carries the S-farnesyl cysteine lipid modification. A propeptide spanning residues Thr-15 to Lys-18 is cleaved from the precursor. Residue Cys-29 is the site of S-farnesyl cysteine attachment. A propeptide spanning residues Thr-30 to Lys-33 is cleaved from the precursor. A lipid anchor (S-farnesyl cysteine) is attached at Cys-44. Residues Thr-45–Lys-48 constitute a propeptide that is removed on maturation. Cys-59 carries the S-farnesyl cysteine lipid modification. The propeptide occupies Thr-60–Ala-62.

The protein resides in the cell membrane. In terms of biological role, rhodotorucin-A is a mating pheromone in cells of mating type A of Rhodosporidium toruloides. This Rhodotorula toruloides (Yeast) protein is Rhodotorucin-A peptides type 1 (RHA1).